The primary structure comprises 1025 residues: Multidrug resistance protein MdtC (1025 aa).

Transmembrane regions (helical) follow at residues 3–23 (FFAL…AITL), 333–353 (EVEQ…FLFL), 360–380 (IIPA…MYLC), 387–407 (LSLM…IVVL), 431–451 (VGFT…PLLL), 463–483 (FAVT…TLTP), 528–548 (LVGV…ISIP), 853–873 (VILI…LYES), 875–895 (VHPL…LLAL), 897–917 (LFNA…IGIV), 953–973 (PIMM…LSGG), and 984–1004 (ITIV…TPVV).

It belongs to the resistance-nodulation-cell division (RND) (TC 2.A.6) family. MdtC subfamily. As to quaternary structure, part of a tripartite efflux system composed of MdtA, MdtB and MdtC. MdtC forms a heteromultimer with MdtB.

The protein localises to the cell inner membrane. The MdtABC tripartite complex confers resistance against novobiocin and deoxycholate. This chain is Multidrug resistance protein MdtC, found in Escherichia coli O139:H28 (strain E24377A / ETEC).